The primary structure comprises 117 residues: Ribosome-binding factor A (117 aa).

It belongs to the RbfA family. As to quaternary structure, monomer. Binds 30S ribosomal subunits, but not 50S ribosomal subunits or 70S ribosomes.

The protein resides in the cytoplasm. In terms of biological role, one of several proteins that assist in the late maturation steps of the functional core of the 30S ribosomal subunit. Associates with free 30S ribosomal subunits (but not with 30S subunits that are part of 70S ribosomes or polysomes). Required for efficient processing of 16S rRNA. May interact with the 5'-terminal helix region of 16S rRNA. This is Ribosome-binding factor A from Bacillus licheniformis (strain ATCC 14580 / DSM 13 / JCM 2505 / CCUG 7422 / NBRC 12200 / NCIMB 9375 / NCTC 10341 / NRRL NRS-1264 / Gibson 46).